The following is a 229-amino-acid chain: Potassium/proton antiporter CemA (229 aa).

3 helical membrane-spanning segments follow: residues 7–27, 107–127, and 189–209; these read FTPL…SFSV, ILHF…SILG, and IISG…KYWI.

The protein belongs to the CemA family.

It localises to the plastid. It is found in the chloroplast inner membrane. It carries out the reaction K(+)(in) + H(+)(out) = K(+)(out) + H(+)(in). In terms of biological role, contributes to K(+)/H(+) antiport activity by supporting proton efflux to control proton extrusion and homeostasis in chloroplasts in a light-dependent manner to modulate photosynthesis. Prevents excessive induction of non-photochemical quenching (NPQ) under continuous-light conditions. Indirectly promotes efficient inorganic carbon uptake into chloroplasts. This is Potassium/proton antiporter CemA from Atropa belladonna (Belladonna).